Consider the following 405-residue polypeptide: Chorismate synthase (405 aa).

NADP(+) contacts are provided by Arg-43 and Arg-49. FMN-binding positions include 138–140 (RAS) and 259–260 (QA). The segment covering 275–286 (RRGSQAHDEMRP) has biased composition (basic and acidic residues). Positions 275 to 308 (RRGSQAHDEMRPGPDGVLRSTNRAGGLEGGMTNG) are disordered. FMN-binding positions include Gly-303, 318–322 (KPIST), and Arg-344.

The protein belongs to the chorismate synthase family. Homotetramer. FMNH2 serves as cofactor.

The catalysed reaction is 5-O-(1-carboxyvinyl)-3-phosphoshikimate = chorismate + phosphate. Its pathway is metabolic intermediate biosynthesis; chorismate biosynthesis; chorismate from D-erythrose 4-phosphate and phosphoenolpyruvate: step 7/7. Catalyzes the anti-1,4-elimination of the C-3 phosphate and the C-6 proR hydrogen from 5-enolpyruvylshikimate-3-phosphate (EPSP) to yield chorismate, which is the branch point compound that serves as the starting substrate for the three terminal pathways of aromatic amino acid biosynthesis. This reaction introduces a second double bond into the aromatic ring system. This chain is Chorismate synthase, found in Nocardia farcinica (strain IFM 10152).